The chain runs to 162 residues: NADH-quinone oxidoreductase subunit I (162 aa).

2 consecutive 4Fe-4S ferredoxin-type domains span residues 52-82 and 93-122; these read LRRYPNGEERCIACKLCEAVCPAQAITIEAG and TRYDIDMVKCIYCGMCQEACPVDAIVEGPN. Positions 62, 65, 68, 72, 102, 105, 108, and 112 each coordinate [4Fe-4S] cluster.

It belongs to the complex I 23 kDa subunit family. NDH-1 is composed of 14 different subunits. Subunits NuoA, H, J, K, L, M, N constitute the membrane sector of the complex. It depends on [4Fe-4S] cluster as a cofactor.

It localises to the cell inner membrane. It carries out the reaction a quinone + NADH + 5 H(+)(in) = a quinol + NAD(+) + 4 H(+)(out). Its function is as follows. NDH-1 shuttles electrons from NADH, via FMN and iron-sulfur (Fe-S) centers, to quinones in the respiratory chain. The immediate electron acceptor for the enzyme in this species is believed to be ubiquinone. Couples the redox reaction to proton translocation (for every two electrons transferred, four hydrogen ions are translocated across the cytoplasmic membrane), and thus conserves the redox energy in a proton gradient. The polypeptide is NADH-quinone oxidoreductase subunit I (Methylobacterium sp. (strain 4-46)).